Reading from the N-terminus, the 802-residue chain is DNA mismatch repair protein MutS (802 aa).

617–624 serves as a coordination point for ATP; sequence GPNMGGKS.

Belongs to the DNA mismatch repair MutS family.

Functionally, this protein is involved in the repair of mismatches in DNA. It is possible that it carries out the mismatch recognition step. This protein has a weak ATPase activity. This chain is DNA mismatch repair protein MutS, found in Buchnera aphidicola subsp. Acyrthosiphon pisum (strain Tuc7).